The following is a 182-amino-acid chain: Isopentenyl-diphosphate Delta-isomerase (182 aa).

Mn(2+) is bound by residues His-25 and His-32. The region spanning 30-164 (LLHLAFSSWL…PWAFSPWMVM (135 aa)) is the Nudix hydrolase domain. Residue Cys-67 is part of the active site. Cys-67 contributes to the Mg(2+) binding site. His-69 is a binding site for Mn(2+). Mg(2+) is bound at residue Glu-87. Residues Glu-114 and Glu-116 each contribute to the Mn(2+) site. Glu-116 is a catalytic residue.

This sequence belongs to the IPP isomerase type 1 family. In terms of assembly, homodimer. The cofactor is Mg(2+). It depends on Mn(2+) as a cofactor.

Its subcellular location is the cytoplasm. It carries out the reaction isopentenyl diphosphate = dimethylallyl diphosphate. Its pathway is isoprenoid biosynthesis; dimethylallyl diphosphate biosynthesis; dimethylallyl diphosphate from isopentenyl diphosphate: step 1/1. In terms of biological role, catalyzes the 1,3-allylic rearrangement of the homoallylic substrate isopentenyl (IPP) to its highly electrophilic allylic isomer, dimethylallyl diphosphate (DMAPP). This is Isopentenyl-diphosphate Delta-isomerase from Escherichia coli O6:H1 (strain CFT073 / ATCC 700928 / UPEC).